A 329-amino-acid chain; its full sequence is Chloroplast envelope quinone oxidoreductase homolog (329 aa).

Position 58 (arginine 58) interacts with substrate.

It belongs to the zinc-containing alcohol dehydrogenase family. Quinone oxidoreductase subfamily. As to quaternary structure, homodimer or homotetramer. Transition to monomer upon NADPH binding. Interacts with calmodulin. Interacts with HP30-1, HP30-2 and HP20.

It is found in the plastid. The protein resides in the chloroplast inner membrane. In terms of biological role, NADPH-dependent alpha,beta-unsaturated oxoene reductase reducing the double bond of medium-chain (C9) to long-chain (C18) reactive electrophile species deriving from poly-unsaturated fatty acid peroxides. The best substrates are 13-lipoxygenase-derived gamma-ketols, but is unable to reduce the double bond of short-chain alkenals and alkenones such as acrolein, crotonaldehyde, 3-buten-2-one, 4-hexen-3-one and trans-2-hexenal, or quinones such as duroquinone, decylubiquinone, coenzyme Q0, menadione, menaquinone and phylloquinone. Can use trans-2-nonenal, trans-3-decen-2-one, 4-hydroxynonenal, 12-oxo-10(E) dodecanoate (traumatin), 4-oxononenal, trans-1,3 diphenyl-2-propenone, trans-1,4-diphenyl-2-butene-1,4-dione, 9-oxo-12,13-epoxy-(10E)-octadecenoic acid (trans-EKODE-1b), 9-hydroxy-12-oxo-10(E)-octadecenoic acid, 9-Hydroxy-12-oxo-10(E),15(Z)-octadecadienoic acid and 9,13-dihydroxy-10-oxo-11-octadecenoic acid as substrates, but has no activity with 13(R,S)-hydroperoxy-9(Z),11(E)-octadecadienoic acid (13-HPOD), 9(S),12(S),13(S)-trihydroxy-10(E)-octadecenoic acid, 13-hydroxy-12-oxo-9(Z)-octadecenoic acid, 9-oxo-10(E),12(Z)-octadecadienoic acid (9-KODE), 13-oxo-9(Z),11(E)-octadecadienoic acid (13-KODE) and 12-oxo-10,15(Z)-phytodienoic acid (12-OPDA). The chain is Chloroplast envelope quinone oxidoreductase homolog from Arabidopsis thaliana (Mouse-ear cress).